We begin with the raw amino-acid sequence, 180 residues long: NAD(P)H-quinone oxidoreductase subunit I, chloroplastic (180 aa).

2 consecutive 4Fe-4S ferredoxin-type domains span residues 55–84 (GRIH…VDWR) and 95–124 (LNYS…MTEE). [4Fe-4S] cluster-binding residues include Cys64, Cys67, Cys70, Cys74, Cys104, Cys107, Cys110, and Cys114.

It belongs to the complex I 23 kDa subunit family. In terms of assembly, NDH is composed of at least 16 different subunits, 5 of which are encoded in the nucleus. It depends on [4Fe-4S] cluster as a cofactor.

It localises to the plastid. It is found in the chloroplast thylakoid membrane. It carries out the reaction a plastoquinone + NADH + (n+1) H(+)(in) = a plastoquinol + NAD(+) + n H(+)(out). It catalyses the reaction a plastoquinone + NADPH + (n+1) H(+)(in) = a plastoquinol + NADP(+) + n H(+)(out). Functionally, NDH shuttles electrons from NAD(P)H:plastoquinone, via FMN and iron-sulfur (Fe-S) centers, to quinones in the photosynthetic chain and possibly in a chloroplast respiratory chain. The immediate electron acceptor for the enzyme in this species is believed to be plastoquinone. Couples the redox reaction to proton translocation, and thus conserves the redox energy in a proton gradient. This Triticum aestivum (Wheat) protein is NAD(P)H-quinone oxidoreductase subunit I, chloroplastic.